The primary structure comprises 459 residues: Protein phosphatase 1M (459 aa).

Positions 1–10 are enriched in basic residues; it reads MSAGWFRRRF. Residues 1-64 form a disordered region; the sequence is MSAGWFRRRF…SRPVRSPARG (64 aa). Over residues 14–27 the composition is skewed to pro residues; sequence EPLPAPRPPGPHAS. The segment covering 38–48 has biased composition (low complexity); that stretch reads RGSSSSPGAAD. Mn(2+)-binding residues include Asp-125 and Gly-126. The PPM-type phosphatase domain maps to 162–459; the sequence is MHLNGRCICP…HSQGQESSDH (298 aa).

This sequence belongs to the PP2C family. Requires Mg(2+) as cofactor. It depends on Mn(2+) as a cofactor.

It is found in the nucleus. The enzyme catalyses O-phospho-L-seryl-[protein] + H2O = L-seryl-[protein] + phosphate. The catalysed reaction is O-phospho-L-threonyl-[protein] + H2O = L-threonyl-[protein] + phosphate. The polypeptide is Protein phosphatase 1M (PPM1M) (Homo sapiens (Human)).